We begin with the raw amino-acid sequence, 116 residues long: Large ribosomal subunit protein bL17 (116 aa).

This sequence belongs to the bacterial ribosomal protein bL17 family. In terms of assembly, part of the 50S ribosomal subunit. Contacts protein L32.

In Picosynechococcus sp. (strain ATCC 27264 / PCC 7002 / PR-6) (Agmenellum quadruplicatum), this protein is Large ribosomal subunit protein bL17.